A 304-amino-acid chain; its full sequence is Calcium release-activated calcium channel protein 1 (304 aa).

The span at 1-11 (MHPEPAPPPNN) shows a compositional bias: pro residues. Positions 1-49 (MHPEPAPPPNNSNPELPLSGGSSTSGSRRSRRRSGDGEPTGAPPLPPPP) are disordered. The Cytoplasmic portion of the chain corresponds to 1 to 88 (MHPEPAPPPN…KLYLSRAKLK (88 aa)). Residues 3-49 (PEPAPPPNNSNPELPLSGGSSTSGSRRSRRRSGDGEPTGAPPLPPPP) form a required for generation of inwardly rectifying CRAC currents region. Over residues 12-27 (SNPELPLSGGSSTSGS) the composition is skewed to low complexity. The interval 39 to 60 (PTGAPPLPPPPAVSYPDWIGQS) is AKAP5 association region. The interaction with STIM1 stretch occupies residues 71–91 (SMQALSWRKLYLSRAKLKASS). A helical transmembrane segment spans residues 89 to 106 (ASSRTSALLSGFAMVAMV). At 107 to 120 (EVQLDTDHDYPPGL) the chain is on the extracellular side. The helical transmembrane segment at 121 to 141 (LIVFSACTTVLVAVHLFALMI) threads the bilayer. The Cytoplasmic segment spans residues 142 to 174 (STCILPNIEAVSNVHNLNSVKESPHERMHRHIE). A helical membrane pass occupies residues 175–195 (LAWAFSTVIGTLLFLAEVVLL). Residues 196–237 (CWVKFLPLKRQAGQPSPTKPPTEPAVVVANSSNNGGITPGEA) are Extracellular-facing. N225 carries an N-linked (GlcNAc...) asparagine glycan. A helical membrane pass occupies residues 238–258 (AAIASTAIMVPCGLVFIVFAV). The Cytoplasmic portion of the chain corresponds to 259–304 (HFYRSLVSHKTDRQFQELNELAEFARLQDQLDHRGDHSLTPGTHYA). The tract at residues 275–295 (ELNELAEFARLQDQLDHRGDH) is interaction with STIM1. A Phosphothreonine modification is found at T298.

This sequence belongs to the Orai family. Oligomerizes in homomeric and heteromeric ORAI complexes. Native CRAC channels most likely consist of hexameric ORAI heteromers, implying that diverse ORAI1, ORAI2 and ORAI3 subunit combinations with distinct biophysical properties can operate in a cell-type specific way. ARC channels are heteropentamers consisting of three ORAI1 and two ORAI3 subunits. Interacts with STIM1 and STIM2; this regulates channel activity. Interacts with CALM; this may displace STIM1 and STIM2 and might thereby modulate channel activity. Interacts (via N-terminus) with AKAP5 upon store depletion. Interacts with CRACR2A/EFCAB4B; the interaction is direct and takes place in absence of Ca(2+). Forms a complex with CRACR2A/EFCAB4B and STIM1 at low concentration of Ca(2+), the complex dissociates at elevated Ca(2+) concentrations. Interacts with ASPH (isoform 8). Interacts with SLC35G1. Interacts with UBQLN1. Interacts with ADCY8; interaction is calcium store depletion independent; interaction occurs in membrane raft; interaction increases markedly after store depletion; positively regulates SOCE-induced adenylate cyclase activity; contributes to the targeting of ADCY8 to discrete regions of the plasma membrane that are shielded from other calcium events. Interacts with EFHB; the interaction takes place upon Ca(2+)-store depletion. Interacts (via N- and C-termini) with ATP2C2 (via N-terminus); this interaction regulates Ca(2+) influx at the plasma membrane. Interacts with TSPAN18; this interaction regulates ORAI1 exit from the endoplasmic (ER), and/or Golgi, and trafficking to the cell surface. Post-translationally, N-glycosylated. N-glycosylation inhibits channel activity in T cells. In terms of processing, ubiquitinated. Cys-195 is oxidated, leading to inactivation of channel activity.

The protein localises to the cell membrane. It localises to the basolateral cell membrane. It catalyses the reaction Ca(2+)(in) = Ca(2+)(out). Its activity is regulated as follows. Oxidation at Cys-196 leads to inactivation of channel activity. Functionally, pore-forming subunit of two major inward rectifying Ca(2+) channels at the plasma membrane: Ca(2+) release-activated Ca(2+) (CRAC) channels and arachidonate-regulated Ca(2+)-selective (ARC) channels. Assembles with ORAI2 and ORAI3 to form hexameric CRAC channels that mediate Ca(2+) influx upon depletion of endoplasmic reticulum Ca(2+) store and channel activation by Ca(2+) sensor STIM1, a process known as store-operated Ca(2+) entry (SOCE). Various pore subunit combinations may account for distinct CRAC channel spatiotemporal and cell-type specific dynamics. ORAI1 mainly contributes to the generation of Ca(2+) plateaus involved in sustained Ca(2+) entry and is dispensable for cytosolic Ca(2+) oscillations, whereas ORAI2 and ORAI3 generate oscillatory patterns. CRAC channels assemble in Ca(2+) signaling microdomains where Ca(2+) influx is coupled to calmodulin and calcineurin signaling and activation of NFAT transcription factors recruited to ORAI1 via AKAP5. Activates NFATC2/NFAT1 and NFATC3/NFAT4-mediated transcriptional responses. CRAC channels are the main pathway for Ca(2+) influx in T cells and promote the immune response to pathogens by activating NFAT-dependent cytokine and chemokine transcription. Assembles with ORAI3 to form channels that mediate store-independent Ca(2+) influx in response to inflammatory metabolites arachidonate or its derivative leukotriene C4, termed ARC and LRC channels respectively. Plays a prominent role in Ca(2+) influx at the basolateral membrane of mammary epithelial cells independently of the Ca(2+) content of endoplasmic reticulum or Golgi stores. May mediate transepithelial transport of large quantities of Ca(2+) for milk secretion. This is Calcium release-activated calcium channel protein 1 (Orai1) from Rattus norvegicus (Rat).